A 26-amino-acid polypeptide reads, in one-letter code: Thrombopoietin (26 aa).

Belongs to the EPO/TPO family.

It localises to the secreted. Lineage-specific cytokine affecting the proliferation and maturation of megakaryocytes from their committed progenitor cells. It acts at a late stage of megakaryocyte development. It may be the major physiological regulator of circulating platelets. The chain is Thrombopoietin (THPO) from Sus scrofa (Pig).